The primary structure comprises 147 residues: Bis(5'-nucleosyl)-tetraphosphatase [asymmetrical] (147 aa).

An N-acetylalanine modification is found at Ala-2. The 138-residue stretch at 2-139 folds into the Nudix hydrolase domain; that stretch reads ALRACGLIIF…EMKATLQEGH (138 aa). The Nudix box signature appears at 43 to 64; it reads GHVDPGENDLETALRETREETG.

The protein belongs to the Nudix hydrolase family. It depends on a divalent metal cation as a cofactor.

It carries out the reaction P(1),P(4)-bis(5'-guanosyl) tetraphosphate + H2O = GMP + GTP + 2 H(+). It catalyses the reaction a 5'-end CoA-ribonucleoside in mRNA + H2O = a 5'-end phospho-adenosine-phospho-ribonucleoside in mRNA + (R)-4'-phosphopantetheine + 2 H(+). The catalysed reaction is a 5'-end FAD-phospho-ribonucleoside in mRNA + H2O = a 5'-end phospho-adenosine-phospho-ribonucleoside in mRNA + FMN + 2 H(+). Its function is as follows. Catalyzes the asymmetric hydrolysis of diadenosine 5',5'''-P1,P4-tetraphosphate (Ap4A) to yield AMP and ATP. Exhibits decapping activity towards FAD-capped RNAs and dpCoA-capped RNAs in vitro. The protein is Bis(5'-nucleosyl)-tetraphosphatase [asymmetrical] (Nudt2) of Mus musculus (Mouse).